Consider the following 243-residue polypeptide: Bidirectional sugar transporter SWEET2a (243 aa).

A signal peptide spans 1-15 (MMNALGLSVAATSTG). The Extracellular segment spans residues 16-24 (SPFHDVCCY). A helical transmembrane segment spans residues 25–45 (GAGIAGNIFALVLFISPLPTF). In terms of domain architecture, MtN3/slv 1 spans 27–112 (GIAGNIFALV…ATFIAFADAK (86 aa)). Residues 46–56 (KRIVRNGSTEQ) are Cytoplasmic-facing. A helical transmembrane segment spans residues 57–79 (FSAMPYIYSLLNCLICLWYGLPF). Topologically, residues 80 to 90 (VSYGVVLVATV) are extracellular. Residues 91-111 (NSIGALFQLAYTATFIAFADA) form a helical membrane-spanning segment. At 112-118 (KNRVKVS) the chain is on the cytoplasmic side. Residues 119 to 139 (SLLVMVFGVFALIVYVSLALF) traverse the membrane as a helical segment. Residues 140–146 (DHQTRQL) lie on the Extracellular side of the membrane. Residues 147–167 (FVGYLSVASLIFMFASPLSII) traverse the membrane as a helical segment. Residues 147–229 (FVGYLSVASL…QLVLYGYFRK (83 aa)) enclose the MtN3/slv 2 domain. Topologically, residues 168-180 (NLVIRTKSVEYMP) are cytoplasmic. A helical membrane pass occupies residues 181-201 (FYLSLSMFLMSVSFFAYGVLL). Residues 202–203 (HD) lie on the Extracellular side of the membrane. A helical transmembrane segment spans residues 204-224 (FFIYIPNGIGTVLGVIQLVLY). Over 225 to 243 (GYFRKGSREDSLPLLVTHT) the chain is Cytoplasmic.

This sequence belongs to the SWEET sugar transporter family. Forms homooligomers and/or heterooligomers.

It localises to the cell membrane. Its function is as follows. Mediates both low-affinity uptake and efflux of sugar across the plasma membrane. In Oryza sativa subsp. indica (Rice), this protein is Bidirectional sugar transporter SWEET2a (SWEET2A).